The chain runs to 324 residues: N-acetylmuramoyl-L-alanine amidase sle1 (324 aa).

The N-terminal stretch at 1 to 25 (MQKKYITAIIGTTALSALASTHAQA) is a signal peptide. 3 LysM domains span residues 27-70 (TTHT…VLKV), 84-127 (TVYT…KLKV), and 147-190 (ATYT…KLKV). One can recognise a Peptidase C51 domain in the interval 200–324 (SNNTRSNGGY…YQVRNYKFIH (125 aa)).

The protein localises to the secreted. It is found in the cell surface. The enzyme catalyses Hydrolyzes the link between N-acetylmuramoyl residues and L-amino acid residues in certain cell-wall glycopeptides.. Peptidoglycan hydrolase involved in the splitting of the septum during cell division. This is N-acetylmuramoyl-L-alanine amidase sle1 (sle1) from Staphylococcus epidermidis (strain ATCC 12228 / FDA PCI 1200).